The chain runs to 426 residues: Enolase (426 aa).

(2R)-2-phosphoglycerate is bound at residue Gln165. Glu207 functions as the Proton donor in the catalytic mechanism. The Mg(2+) site is built by Asp244, Glu285, and Asp312. The (2R)-2-phosphoglycerate site is built by Lys337, Arg366, Ser367, and Lys388. Lys337 (proton acceptor) is an active-site residue.

The protein belongs to the enolase family. Mg(2+) is required as a cofactor.

It localises to the cytoplasm. The protein localises to the secreted. It is found in the cell surface. It catalyses the reaction (2R)-2-phosphoglycerate = phosphoenolpyruvate + H2O. It functions in the pathway carbohydrate degradation; glycolysis; pyruvate from D-glyceraldehyde 3-phosphate: step 4/5. Functionally, catalyzes the reversible conversion of 2-phosphoglycerate (2-PG) into phosphoenolpyruvate (PEP). It is essential for the degradation of carbohydrates via glycolysis. This is Enolase from Thermosynechococcus vestitus (strain NIES-2133 / IAM M-273 / BP-1).